A 1369-amino-acid polypeptide reads, in one-letter code: Xanthine dehydrogenase (1369 aa).

A 2Fe-2S ferredoxin-type domain is found at 20-106 (GEAVVYVNGV…GMHIITVEGI (87 aa)). Residues C58, C63, C66, C88, C128, C131, C164, and C166 each coordinate [2Fe-2S] cluster. One can recognise an FAD-binding PCMH-type domain in the interval 265–450 (NGFNGIRWYR…LSVILPWTRP (186 aa)). FAD-binding positions include 293–300 (LIIGNSEV), F373, 383–387 (SVGGN), D396, L440, and K458. Mo-molybdopterin-binding residues include Q804 and F835. Residues E839 and R917 each coordinate substrate. R949 is a Mo-molybdopterin binding site. Positions 951 and 1047 each coordinate substrate. Mo-molybdopterin is bound at residue A1116. E1305 functions as the Proton acceptor in the catalytic mechanism.

It belongs to the xanthine dehydrogenase family. In terms of assembly, homodimer. [2Fe-2S] cluster is required as a cofactor. Requires FAD as cofactor. The cofactor is Mo-molybdopterin.

It catalyses the reaction xanthine + NAD(+) + H2O = urate + NADH + H(+). It carries out the reaction hypoxanthine + NAD(+) + H2O = xanthine + NADH + H(+). Its function is as follows. Key enzyme involved in purine catabolism. Catalyzes the oxidation of hypoxanthine to xanthine and the oxidation of xanthine to urate. The sequence is that of Xanthine dehydrogenase (XDH) from Oryza sativa subsp. japonica (Rice).